Here is a 568-residue protein sequence, read N- to C-terminus: 2-succinyl-5-enolpyruvyl-6-hydroxy-3-cyclohexene-1-carboxylate synthase (568 aa).

This sequence belongs to the TPP enzyme family. MenD subfamily. Homodimer. The cofactor is Mg(2+). It depends on Mn(2+) as a cofactor. Requires thiamine diphosphate as cofactor.

It carries out the reaction isochorismate + 2-oxoglutarate + H(+) = 5-enolpyruvoyl-6-hydroxy-2-succinyl-cyclohex-3-ene-1-carboxylate + CO2. It participates in quinol/quinone metabolism; 1,4-dihydroxy-2-naphthoate biosynthesis; 1,4-dihydroxy-2-naphthoate from chorismate: step 2/7. The protein operates within quinol/quinone metabolism; menaquinone biosynthesis. Functionally, catalyzes the thiamine diphosphate-dependent decarboxylation of 2-oxoglutarate and the subsequent addition of the resulting succinic semialdehyde-thiamine pyrophosphate anion to isochorismate to yield 2-succinyl-5-enolpyruvyl-6-hydroxy-3-cyclohexene-1-carboxylate (SEPHCHC). This Haemophilus influenzae (strain PittGG) protein is 2-succinyl-5-enolpyruvyl-6-hydroxy-3-cyclohexene-1-carboxylate synthase.